Reading from the N-terminus, the 95-residue chain is Putative pterin-4-alpha-carbinolamine dehydratase (95 aa).

It belongs to the pterin-4-alpha-carbinolamine dehydratase family.

The enzyme catalyses (4aS,6R)-4a-hydroxy-L-erythro-5,6,7,8-tetrahydrobiopterin = (6R)-L-erythro-6,7-dihydrobiopterin + H2O. This is Putative pterin-4-alpha-carbinolamine dehydratase from Thermosynechococcus vestitus (strain NIES-2133 / IAM M-273 / BP-1).